The sequence spans 324 residues: Phospho-N-acetylmuramoyl-pentapeptide-transferase (324 aa).

A run of 10 helical transmembrane segments spans residues 5–25 (GLLV…PLFI), 52–72 (PTMG…IMAI), 77–97 (LGAE…IGFL), 122–142 (VIAI…YIMI), 149–169 (FELG…GSNA), 176–196 (LDGL…IIAV), 201–221 (FGVA…LVFN), 227–247 (VFMG…VAIL), 253–273 (LLVI…IQVI), and 302–322 (VVVT…YIGV).

The protein belongs to the glycosyltransferase 4 family. MraY subfamily. Requires Mg(2+) as cofactor.

The protein resides in the cell membrane. It catalyses the reaction UDP-N-acetyl-alpha-D-muramoyl-L-alanyl-gamma-D-glutamyl-meso-2,6-diaminopimeloyl-D-alanyl-D-alanine + di-trans,octa-cis-undecaprenyl phosphate = di-trans,octa-cis-undecaprenyl diphospho-N-acetyl-alpha-D-muramoyl-L-alanyl-D-glutamyl-meso-2,6-diaminopimeloyl-D-alanyl-D-alanine + UMP. It functions in the pathway cell wall biogenesis; peptidoglycan biosynthesis. In terms of biological role, catalyzes the initial step of the lipid cycle reactions in the biosynthesis of the cell wall peptidoglycan: transfers peptidoglycan precursor phospho-MurNAc-pentapeptide from UDP-MurNAc-pentapeptide onto the lipid carrier undecaprenyl phosphate, yielding undecaprenyl-pyrophosphoryl-MurNAc-pentapeptide, known as lipid I. This is Phospho-N-acetylmuramoyl-pentapeptide-transferase from Bacillus mycoides (strain KBAB4) (Bacillus weihenstephanensis).